The chain runs to 340 residues: MSDIDPTVRADPLPEDHDRALRPQMLSEFVGQAEARANLKVFIASARQRGEAMDHTLFHGPPGLGKTTLAQIMARELGVGFRMTSGPVLAKAGDLAAILTNLEKRDVLFIDEIHRLNPAVEEVLYPALEDFELDLVIGEGPAARTVRIELQPFTLVGATTRMGLLTTPLRDRFGIPTRLQFYTEDELFIIVDRNARKLGAPADEGGAREIARRARGTPRIAGRLLRRVVDFAVVEGDGRVTRALADMALNRLGVDHLGLDGADRRYLRLIAENYGGGPVGIETMSAALSESRDALEEVIEPFLLQQGLIQRTPRGRMLAQKGWTHLGLDAPRAQTDLFEG.

The large ATPase domain (RuvB-L) stretch occupies residues 1–182 (MSDIDPTVRA…FGIPTRLQFY (182 aa)). Residues Leu-21, Arg-22, Gly-63, Lys-66, Thr-67, Thr-68, 129 to 131 (EDF), Arg-172, Tyr-182, and Arg-219 each bind ATP. Thr-67 is a binding site for Mg(2+). Positions 183–253 (TEDELFIIVD…LADMALNRLG (71 aa)) are small ATPAse domain (RuvB-S). The segment at 256–340 (HLGLDGADRR…PRAQTDLFEG (85 aa)) is head domain (RuvB-H). DNA is bound by residues Arg-292, Arg-311, and Arg-316.

Belongs to the RuvB family. Homohexamer. Forms an RuvA(8)-RuvB(12)-Holliday junction (HJ) complex. HJ DNA is sandwiched between 2 RuvA tetramers; dsDNA enters through RuvA and exits via RuvB. An RuvB hexamer assembles on each DNA strand where it exits the tetramer. Each RuvB hexamer is contacted by two RuvA subunits (via domain III) on 2 adjacent RuvB subunits; this complex drives branch migration. In the full resolvosome a probable DNA-RuvA(4)-RuvB(12)-RuvC(2) complex forms which resolves the HJ.

The protein resides in the cytoplasm. The enzyme catalyses ATP + H2O = ADP + phosphate + H(+). The RuvA-RuvB-RuvC complex processes Holliday junction (HJ) DNA during genetic recombination and DNA repair, while the RuvA-RuvB complex plays an important role in the rescue of blocked DNA replication forks via replication fork reversal (RFR). RuvA specifically binds to HJ cruciform DNA, conferring on it an open structure. The RuvB hexamer acts as an ATP-dependent pump, pulling dsDNA into and through the RuvAB complex. RuvB forms 2 homohexamers on either side of HJ DNA bound by 1 or 2 RuvA tetramers; 4 subunits per hexamer contact DNA at a time. Coordinated motions by a converter formed by DNA-disengaged RuvB subunits stimulates ATP hydrolysis and nucleotide exchange. Immobilization of the converter enables RuvB to convert the ATP-contained energy into a lever motion, pulling 2 nucleotides of DNA out of the RuvA tetramer per ATP hydrolyzed, thus driving DNA branch migration. The RuvB motors rotate together with the DNA substrate, which together with the progressing nucleotide cycle form the mechanistic basis for DNA recombination by continuous HJ branch migration. Branch migration allows RuvC to scan DNA until it finds its consensus sequence, where it cleaves and resolves cruciform DNA. In Roseobacter denitrificans (strain ATCC 33942 / OCh 114) (Erythrobacter sp. (strain OCh 114)), this protein is Holliday junction branch migration complex subunit RuvB.